The following is a 488-amino-acid chain: Spermatogenesis-associated protein 6 (488 aa).

Positions 1-17 (MPKVKALQCALALEIRS) are cleaved as a signal peptide. Residues 176–225 (HGRLQCRTSRSQKKKSKSPERSKYCINTKNYEQPTISSKSHSPSPYTKRR) form a disordered region. Positions 200–220 (CINTKNYEQPTISSKSHSPSP) are enriched in polar residues. Phosphoserine occurs at positions 217 and 219. A Glycyl lysine isopeptide (Lys-Gly) (interchain with G-Cter in SUMO2) cross-link involves residue Lys248. Phosphoserine is present on residues Ser265, Ser274, Ser325, Ser343, Ser346, Ser354, Ser424, Ser465, and Ser487.

Belongs to the SPATA6 family. As to quaternary structure, interacts with MYL6. In terms of tissue distribution, specifically expressed in developing spermatids and mature spermatozoa (at protein level). Isoform 1 is weakly expressed in testis, ovary, thymus and placenta. Isoform 2 and isoform 3 are testis-specific. Expression isw higher in spermatids than in spermatocytes and spermatogonia.

It localises to the secreted. The protein resides in the cell projection. The protein localises to the cilium. It is found in the flagellum. Required for formation of the sperm connecting piece during spermiogenesis. Sperm connecting piece is essential for linking the developing flagellum to the head during late spermiogenesis. May be involved in myosin-based microfilament transport through interaction with myosin subunits. This is Spermatogenesis-associated protein 6 from Mus musculus (Mouse).